Reading from the N-terminus, the 143-residue chain is UPF0292 protein Mbar_A0484 (143 aa).

One can recognise a Toprim domain in the interval G28–L109. Mg(2+)-binding residues include E34, D78, and D80.

It belongs to the UPF0292 family. Requires Mg(2+) as cofactor.

The polypeptide is UPF0292 protein Mbar_A0484 (Methanosarcina barkeri (strain Fusaro / DSM 804)).